A 364-amino-acid chain; its full sequence is Protein spindle-F (364 aa).

Residues 1-26 (MEASAAKITPMASSMSASGSTNSPSS) form a disordered region. Residues 9-26 (TPMASSMSASGSTNSPSS) show a composition bias toward low complexity. Positions 32–114 (ALQVALQTIK…GMVSNENRRL (83 aa)) form a coiled coil. Residue serine 53 is modified to Phosphoserine. The segment at 56–75 (EENQQLREASSRSEGAPRAN) is disordered. A phosphoserine mark is found at serine 85, serine 172, and serine 202. Residues 210-243 (AKRCLDGLQELRREAMKQQQELRSVMTLLENRIA) adopt a coiled-coil conformation. Residues serine 264 and serine 270 each carry the phosphoserine modification. Residues 310–336 (EKTCPMCGKQYSSQVSFNAFREHVEMH) form a UBZ1-type zinc finger. Cysteine 313 and cysteine 316 together coordinate Zn(2+). Serine 325 carries the post-translational modification Phosphoserine. Zn(2+)-binding residues include histidine 332 and histidine 336. At serine 349 the chain carries Phosphoserine.

Forms homooligomers. Interacts with the dynein light chain ctp. Interacts (via C-terminus) with IKKepsilon; this leads to phosphorylation of spn-F. Forms ternary complexes with ctp and IKKepsilon; this is required for spn-F redistribution from puncta in larval neurons and for dendrite pruning. Interacts with ctp and IKKepsilon through distinct regions. Interacts (via C-terminus) with jvl. Post-translationally, phosphorylated by IKKepsilon. Phosphorylation is required for spn-F neuronal distribution and dendrite pruning and reduces spn-F homooligomerization. It does not lead to spn-F degradation. In pupal bristles, localizes to the bristle tip throughout the elongation period (at protein level).

It localises to the cytoplasm. Its subcellular location is the cytoskeleton. The protein localises to the cell projection. The protein resides in the axon. It is found in the dendrite. It localises to the perikaryon. In terms of biological role, plays a role in oocyte axis determination and microtubule organization during oogenesis. Also required for polarized organization of the bristle. Required, with jvl, for activation of the kinase IKKepsilon in the germ line. Also required for localization of IKKepsilon to the distal tip of elongating bristles by acting as an adapter linking IKKepsilon and cytoplasmic dynein. Involved in dendrite pruning in larval sensory neurons during metamorphosis. This Drosophila melanogaster (Fruit fly) protein is Protein spindle-F.